Consider the following 491-residue polypeptide: Cytochrome P450 2B4 (491 aa).

Serine 128 is subject to Phosphoserine; by PKA. Residue cysteine 436 participates in heme binding.

Belongs to the cytochrome P450 family. Requires heme as cofactor.

It is found in the endoplasmic reticulum membrane. The protein localises to the microsome membrane. It carries out the reaction an organic molecule + reduced [NADPH--hemoprotein reductase] + O2 = an alcohol + oxidized [NADPH--hemoprotein reductase] + H2O + H(+). Its function is as follows. Cytochromes P450 are a group of heme-thiolate monooxygenases. In liver microsomes, this enzyme is involved in an NADPH-dependent electron transport pathway. It oxidizes a variety of structurally unrelated compounds, including steroids, fatty acids, and xenobiotics. In the epoxidation of arachidonic acid it has a unique preference for the 5,6-olefin. This Oryctolagus cuniculus (Rabbit) protein is Cytochrome P450 2B4 (CYP2B4).